Reading from the N-terminus, the 434-residue chain is Zinc finger and BTB domain-containing protein 8A (434 aa).

The 69-residue stretch at 24–92 (CDCSILVEGK…VYSGKLSLTG (69 aa)) folds into the BTB domain. The disordered stretch occupies residues 134-238 (SLSDKDTGSN…SGNHVSQSEE (105 aa)). A phosphoserine mark is found at Ser-161 and Ser-167. Glycyl lysine isopeptide (Lys-Gly) (interchain with G-Cter in SUMO2) cross-links involve residues Lys-172, Lys-176, and Lys-193. The segment covering 192–202 (AKHEQRKEPSK) has biased composition (basic and acidic residues). Residues 226–238 (QTDSGNHVSQSEE) are compositionally biased toward polar residues. C2H2-type zinc fingers lie at residues 275 to 297 (FKCPFCTHVVKRKADLKRHLRCH) and 303 to 326 (YPCQACGKRFSRLDHLSSHFRTIH). Residue Lys-430 forms a Glycyl lysine isopeptide (Lys-Gly) (interchain with G-Cter in SUMO2) linkage.

The protein localises to the nucleus. Functionally, may be involved in transcriptional regulation. The polypeptide is Zinc finger and BTB domain-containing protein 8A (Zbtb8a) (Mus musculus (Mouse)).